A 115-amino-acid chain; its full sequence is uncharacterized protein (115 aa).

It belongs to the transposase 34 family.

This is an uncharacterized protein from Sinorhizobium fredii (strain NBRC 101917 / NGR234).